The chain runs to 206 residues: MLFASNAIILKIKQRNSNSYIYTLYTYEEGLKEVIIFTNQKILCSNLKLYRIYFVLFKKGAPWDQIQRLYPLFFYPKIEQNPLKMIVLEYLSELIIYQLYSPENCTFIYFIFHYTLFQLNICSNNMILPIFISSLYSLLKFLGWEPELSNCVYTGESLNSENSNLTDSKIGFSASYGGIVKLNVLPKQEYIGFFNKDELFIFTNDN.

Its subcellular location is the plastid. The protein resides in the cyanelle. This is an uncharacterized protein from Cyanophora paradoxa.